The primary structure comprises 198 residues: Nucleoside triphosphate pyrophosphatase 1 (198 aa).

Residue Asp75 is the Proton acceptor of the active site.

Belongs to the Maf family. A divalent metal cation is required as a cofactor.

It is found in the cytoplasm. It catalyses the reaction a ribonucleoside 5'-triphosphate + H2O = a ribonucleoside 5'-phosphate + diphosphate + H(+). The enzyme catalyses a 2'-deoxyribonucleoside 5'-triphosphate + H2O = a 2'-deoxyribonucleoside 5'-phosphate + diphosphate + H(+). Its function is as follows. Nucleoside triphosphate pyrophosphatase. May have a dual role in cell division arrest and in preventing the incorporation of modified nucleotides into cellular nucleic acids. This Jannaschia sp. (strain CCS1) protein is Nucleoside triphosphate pyrophosphatase 1.